A 194-amino-acid chain; its full sequence is 2,4-dinitrotoluene dioxygenase system, small oxygenase component (194 aa).

This sequence belongs to the bacterial ring-hydroxylating dioxygenase beta subunit family. As to quaternary structure, the 2,4-dinitrotoluene dioxygenase (DNTDO) multicomponent enzyme system is composed of an electron transfer component and a dioxygenase component (iron sulfur protein (ISP)). The electron transfer component is composed of a ferredoxin reductase (DntAa) and a ferredoxin (DntAb), and the dioxygenase component is formed of a large alpha subunit (DntAc) and a small beta subunit (DntAd).

Functionally, component of the 2,4-dinitrotoluene dioxygenase (DNTDO) multicomponent enzyme system which catalyzes the incorporation of both atoms of molecular oxygen into 2,4-dinitrotoluene (DNT) to form 4-methyl-5-nitrocatechol (MNC) and nitrite. The beta subunit seems to have a structural role in the holoenzyme. Also able to convert naphthalene to cis-(1R,2S)-dihydroxy-1,2-dihydronaphthalene. This Burkholderia sp. (strain RASC) protein is 2,4-dinitrotoluene dioxygenase system, small oxygenase component.